A 93-amino-acid polypeptide reads, in one-letter code: Phosphoribosyl-ATP pyrophosphatase (93 aa).

It belongs to the PRA-PH family.

The protein localises to the cytoplasm. It catalyses the reaction 1-(5-phospho-beta-D-ribosyl)-ATP + H2O = 1-(5-phospho-beta-D-ribosyl)-5'-AMP + diphosphate + H(+). It participates in amino-acid biosynthesis; L-histidine biosynthesis; L-histidine from 5-phospho-alpha-D-ribose 1-diphosphate: step 2/9. The polypeptide is Phosphoribosyl-ATP pyrophosphatase (Mycobacterium sp. (strain JLS)).